A 341-amino-acid polypeptide reads, in one-letter code: Farnesyl pyrophosphate synthase (341 aa).

Isopentenyl diphosphate is bound by residues K48, R51, and Q86. Residues D93 and D97 each coordinate Mg(2+). Position 102 (R102) interacts with dimethylallyl diphosphate. Residue R103 participates in isopentenyl diphosphate binding. Dimethylallyl diphosphate is bound by residues K190, T191, Q229, and K246.

The protein belongs to the FPP/GGPP synthase family. Requires Mg(2+) as cofactor.

Its subcellular location is the cytoplasm. It catalyses the reaction isopentenyl diphosphate + dimethylallyl diphosphate = (2E)-geranyl diphosphate + diphosphate. The enzyme catalyses isopentenyl diphosphate + (2E)-geranyl diphosphate = (2E,6E)-farnesyl diphosphate + diphosphate. It participates in isoprenoid biosynthesis; farnesyl diphosphate biosynthesis; farnesyl diphosphate from geranyl diphosphate and isopentenyl diphosphate: step 1/1. The protein operates within isoprenoid biosynthesis; geranyl diphosphate biosynthesis; geranyl diphosphate from dimethylallyl diphosphate and isopentenyl diphosphate: step 1/1. Its function is as follows. Catalyzes the sequential condensation of isopentenyl pyrophosphate with the allylic pyrophosphates, dimethylallyl pyrophosphate, and then with the resultant geranylpyrophosphate to the ultimate product farnesyl pyrophosphate. The polypeptide is Farnesyl pyrophosphate synthase (FPS1) (Helianthus annuus (Common sunflower)).